Reading from the N-terminus, the 309-residue chain is Peptide methionine sulfoxide reductase MsrA/MsrB (309 aa).

The interval 1–153 is peptide methionine sulfoxide reductase A; the sequence is MIYLAGGCFW…PNGYCHIDIN (153 aa). Cys8 is an active-site residue. Positions 170-293 constitute a MsrB domain; it reads ATEIKEKLSA…NSLSITFIPK (124 aa). Cys282 serves as the catalytic Nucleophile.

This sequence in the N-terminal section; belongs to the MsrA Met sulfoxide reductase family. It in the C-terminal section; belongs to the MsrB Met sulfoxide reductase family.

The enzyme catalyses L-methionyl-[protein] + [thioredoxin]-disulfide + H2O = L-methionyl-(S)-S-oxide-[protein] + [thioredoxin]-dithiol. It carries out the reaction [thioredoxin]-disulfide + L-methionine + H2O = L-methionine (S)-S-oxide + [thioredoxin]-dithiol. The catalysed reaction is L-methionyl-[protein] + [thioredoxin]-disulfide + H2O = L-methionyl-(R)-S-oxide-[protein] + [thioredoxin]-dithiol. Functionally, has an important function as a repair enzyme for proteins that have been inactivated by oxidation. Catalyzes the reversible oxidation-reduction of methionine sulfoxide in proteins to methionine. The chain is Peptide methionine sulfoxide reductase MsrA/MsrB (msrAB) from Streptococcus pyogenes serotype M1.